The primary structure comprises 191 residues: Programmed cell death protein 6 (191 aa).

At alanine 2 the chain carries N-acetylalanine. EF-hand domains lie at 23 to 58 (PDQS…GTWT), 59 to 89 (PFNP…TGVW), 90 to 125 (KYIT…FGYR), 126 to 161 (LSDQ…LQRL), and 162 to 191 (TDIF…FSIV). Residues aspartate 36, aspartate 38, serine 40, valine 42, and glutamate 47 each coordinate Ca(2+). The Ca(2+) site is built by aspartate 103, aspartate 105, serine 107, methionine 109, and glutamate 114. Mg(2+) contacts are provided by aspartate 169, aspartate 171, aspartate 173, and tryptophan 175.

In terms of assembly, homodimer and heterodimer; heterodimerizes (via the EF-hand 5) with PEF1. Isoform 1 and isoform 2 self-associate; probably forming homodimers. Interacts with CPNE4 (via VWFA domain). Interacts with PDCD6IP; the interaction is calcium-dependent. Interacts with RBM22. Interacts with PLSCR4. Interacts with ANXA7 and TSG101. Interacts with DAPK1. Interacts with SEC31A; the interaction is calcium-dependent and promotes monoubiquitination of SEC31A. Interacts with ANXA11 (via N-terminus); the interaction is calcium-dependent. Interacts with PLSCR3 (via N-terminus); the interaction is calcium-dependent. Interacts with MCOLN1; the interaction is calcium-dependent. Interacts with KDR; the interaction is calcium-dependent. Interacts with HEBP2; the interaction is calcium-dependent. Interacts with TFG. Isoform 1: Interacts with SHISA5, leading to stabilize it. Isoform 2: Does not interact with SHISA5. Isoform 2: Does not interact with PDCD6IP, TSG101, ANXA7 and ANXA11.

The protein resides in the endoplasmic reticulum membrane. Its subcellular location is the cytoplasmic vesicle. It localises to the COPII-coated vesicle membrane. The protein localises to the cytoplasm. It is found in the nucleus. The protein resides in the endosome. In terms of biological role, calcium sensor that plays a key role in processes such as endoplasmic reticulum (ER)-Golgi vesicular transport, endosomal biogenesis or membrane repair. Acts as an adapter that bridges unrelated proteins or stabilizes weak protein-protein complexes in response to calcium: calcium-binding triggers exposure of apolar surface, promoting interaction with different sets of proteins thanks to 3 different hydrophobic pockets, leading to translocation to membranes. Involved in ER-Golgi transport. Regulates ER-Golgi transport by promoting the association between PDCD6IP and TSG101, thereby bridging together the ESCRT-III and ESCRT-I complexes. Together with PEF1, acts as a calcium-dependent adapter for the BCR(KLHL12) complex, a complex involved in ER-Golgi transport by regulating the size of COPII coats. In response to cytosolic calcium increase, the heterodimer formed with PEF1 interacts with, and bridges together the BCR(KLHL12) complex and SEC31 (SEC31A or SEC31B), promoting monoubiquitination of SEC31 and subsequent collagen export, which is required for neural crest specification. Involved in the regulation of the distribution and function of MCOLN1 in the endosomal pathway. Promotes localization and polymerization of TFG at endoplasmic reticulum exit site. Required for T-cell receptor-, Fas-, and glucocorticoid-induced apoptosis. May mediate Ca(2+)-regulated signals along the death pathway: interaction with DAPK1 can accelerate apoptotic cell death by increasing caspase-3 activity. Its role in apoptosis may however be indirect, as suggested by knockout experiments. May inhibit KDR/VEGFR2-dependent angiogenesis; the function involves inhibition of VEGF-induced phosphorylation of the Akt signaling pathway. Functionally, has a lower Ca(2+) affinity than isoform 1. The polypeptide is Programmed cell death protein 6 (Rattus norvegicus (Rat)).